Here is a 326-residue protein sequence, read N- to C-terminus: Light-induced protein, chloroplastic (326 aa).

Residues 1–63 (MASISSLNQI…TNPKPKFTAQ (63 aa)) constitute a chloroplast transit peptide.

Belongs to the LIPC family. In terms of assembly, associates with the major light-harvesting antenna complex polypeptides of the PSII oxygen-evolving complex. Expressed in leaves.

Its subcellular location is the plastid. It is found in the chloroplast thylakoid membrane. Its function is as follows. Required for normal plant growth. May be both photoprotective and play an ancillary role in photosynthesis. May structurally stabilize thylakoids during osmotic and oxidative stress. The polypeptide is Light-induced protein, chloroplastic (Solanum tuberosum (Potato)).